Reading from the N-terminus, the 405-residue chain is Imidazolonepropionase (405 aa).

The Fe(3+) site is built by histidine 70 and histidine 72. Positions 70 and 72 each coordinate Zn(2+). Positions 79, 142, and 175 each coordinate 4-imidazolone-5-propanoate. Tyrosine 142 contacts N-formimidoyl-L-glutamate. Histidine 240 lines the Fe(3+) pocket. Position 240 (histidine 240) interacts with Zn(2+). 4-imidazolone-5-propanoate is bound at residue glutamine 243. Aspartate 315 serves as a coordination point for Fe(3+). Aspartate 315 provides a ligand contact to Zn(2+). Asparagine 317 and glycine 319 together coordinate N-formimidoyl-L-glutamate. Serine 320 contributes to the 4-imidazolone-5-propanoate binding site.

This sequence belongs to the metallo-dependent hydrolases superfamily. HutI family. Requires Zn(2+) as cofactor. Fe(3+) serves as cofactor.

It is found in the cytoplasm. The catalysed reaction is 4-imidazolone-5-propanoate + H2O = N-formimidoyl-L-glutamate. It participates in amino-acid degradation; L-histidine degradation into L-glutamate; N-formimidoyl-L-glutamate from L-histidine: step 3/3. Its function is as follows. Catalyzes the hydrolytic cleavage of the carbon-nitrogen bond in imidazolone-5-propanoate to yield N-formimidoyl-L-glutamate. It is the third step in the universal histidine degradation pathway. This chain is Imidazolonepropionase, found in Ruegeria sp. (strain TM1040) (Silicibacter sp.).